Consider the following 638-residue polypeptide: Threonine--tRNA ligase (638 aa).

Positions 1–61 constitute a TGS domain; that stretch reads MPEITLPDGS…DNDSKVVIIT (61 aa). The interval 242-533 is catalytic; it reads DHRKLGKKHS…LIEQYEAKFP (292 aa). Zn(2+) is bound by residues cysteine 333, histidine 384, and histidine 510.

The protein belongs to the class-II aminoacyl-tRNA synthetase family. As to quaternary structure, homodimer. Zn(2+) serves as cofactor.

It localises to the cytoplasm. The catalysed reaction is tRNA(Thr) + L-threonine + ATP = L-threonyl-tRNA(Thr) + AMP + diphosphate + H(+). In terms of biological role, catalyzes the attachment of threonine to tRNA(Thr) in a two-step reaction: L-threonine is first activated by ATP to form Thr-AMP and then transferred to the acceptor end of tRNA(Thr). Also edits incorrectly charged L-seryl-tRNA(Thr). This chain is Threonine--tRNA ligase, found in Prochlorococcus marinus subsp. pastoris (strain CCMP1986 / NIES-2087 / MED4).